A 152-amino-acid polypeptide reads, in one-letter code: 3-dehydroquinate dehydratase (152 aa).

Residue Tyr-26 is the Proton acceptor of the active site. Substrate is bound by residues Asn-77, His-83, and Asp-90. His-103 functions as the Proton donor in the catalytic mechanism. Residues 104–105 (LS) and Arg-114 each bind substrate.

It belongs to the type-II 3-dehydroquinase family. Homododecamer.

The catalysed reaction is 3-dehydroquinate = 3-dehydroshikimate + H2O. The protein operates within metabolic intermediate biosynthesis; chorismate biosynthesis; chorismate from D-erythrose 4-phosphate and phosphoenolpyruvate: step 3/7. In terms of biological role, catalyzes a trans-dehydration via an enolate intermediate. The sequence is that of 3-dehydroquinate dehydratase (aroQ) from Synechocystis sp. (strain ATCC 27184 / PCC 6803 / Kazusa).